Consider the following 692-residue polypeptide: MAREFSLENTRNIGIMAHIDAGKTTATERILYYTGRIHKIGETHEGASQMDWMEQEQERGITITSAATTAQWKGHRVNIIDTPGHVDFTVEVERSLRVLDGAVAVLDAQSGVEPQTETVWRQATTYGVPRIVFVNKMDKIGADFLYSVGTIHDRLQANAHPIQLPIGAEDEFNGIIDLVEECAYMYGNDLGTDIQRVEIPEEHKELAEEYRGKLIEAVAELDEEMMMKYLEGEEITVEELKAGIRKATTSVEFFPVICGSAFKNKGVQILLDAVIDYLPSPLDVPAIKGIVPDTDEEVERKSSDEEPFAALAFKIMTDPYVGKLTFFRVYSGVLNSGSYVKNSTKGKRERVGRILQMHANSREEISTVYAGDIAAAVGLKDTTTGDTLCDEKSLVILESMEFPEPVISVAIEPKSKADQDKMGTALSKLSEEDPTFRAHTDQETGQTIIAGMGELHLDIIVDRMRREFKVEANVGAPQVAYRETFRAAAKVEGKFARQSGGRGQFGHVWIEFEPNEEGKGFEFENKIVGGVVPREYIPAVGAGLEDALKNGVLAGYPVVDIKAALVDGSYHDVDSSEMAFKIAASMALKAAVSKCNPVILEPMMKVEVVIPEEYMGDIMGDVTSRRGRVEGMEARGNAQVVRAMVPLSEMFGYATSLRSNTQGRGTFSMVFDHYEEVPKSVSEEIIKKNKGE.

A tr-type G domain is found at 8–282 (ENTRNIGIMA…AVIDYLPSPL (275 aa)). Residues 17-24 (AHIDAGKT), 81-85 (DTPGH), and 135-138 (NKMD) contribute to the GTP site.

This sequence belongs to the TRAFAC class translation factor GTPase superfamily. Classic translation factor GTPase family. EF-G/EF-2 subfamily.

It is found in the cytoplasm. Functionally, catalyzes the GTP-dependent ribosomal translocation step during translation elongation. During this step, the ribosome changes from the pre-translocational (PRE) to the post-translocational (POST) state as the newly formed A-site-bound peptidyl-tRNA and P-site-bound deacylated tRNA move to the P and E sites, respectively. Catalyzes the coordinated movement of the two tRNA molecules, the mRNA and conformational changes in the ribosome. The chain is Elongation factor G from Bacillus thuringiensis subsp. konkukian (strain 97-27).